We begin with the raw amino-acid sequence, 409 residues long: Pyrophosphate--fructose 6-phosphate 1-phosphotransferase (409 aa).

A diphosphate-binding site is contributed by Gly14. Position 123 (Asp123) interacts with Mg(2+). Substrate contacts are provided by residues 151 to 153 (TVD), 196 to 198 (MGR), Glu268, and 325 to 328 (YFAR). Asp153 (proton acceptor) is an active-site residue.

This sequence belongs to the phosphofructokinase type A (PFKA) family. PPi-dependent PFK group II subfamily. Clade 'P' sub-subfamily. In terms of assembly, homodimer. The cofactor is Mg(2+).

It localises to the cytoplasm. The enzyme catalyses beta-D-fructose 6-phosphate + diphosphate = beta-D-fructose 1,6-bisphosphate + phosphate + H(+). It participates in carbohydrate degradation; glycolysis; D-glyceraldehyde 3-phosphate and glycerone phosphate from D-glucose: step 3/4. Its activity is regulated as follows. Non-allosteric. Catalyzes the phosphorylation of D-fructose 6-phosphate, the first committing step of glycolysis. Uses inorganic phosphate (PPi) as phosphoryl donor instead of ATP like common ATP-dependent phosphofructokinases (ATP-PFKs), which renders the reaction reversible, and can thus function both in glycolysis and gluconeogenesis. Consistently, PPi-PFK can replace the enzymes of both the forward (ATP-PFK) and reverse (fructose-bisphosphatase (FBPase)) reactions. This is Pyrophosphate--fructose 6-phosphate 1-phosphotransferase from Methylomonas methanica.